A 422-amino-acid chain; its full sequence is Nucleoside transporter 1 (422 aa).

At 1 to 38 (MSTGKESSKAYADIESRGDYKDDGKKGSTLSSKQHFML) the chain is on the cytoplasmic side. Residues 39–59 (SLTFILIGLSSLNVWNTALGL) traverse the membrane as a helical segment. Position 53 (Trp-53) interacts with inosine. The Extracellular segment spans residues 60 to 63 (NINF). Residues 64 to 82 (KYNTFQITGLVCSSIVALF) traverse the membrane as a helical segment. The Cytoplasmic portion of the chain corresponds to 83–87 (VEIPK). A helical membrane pass occupies residues 88 to 107 (IMLPFLLGGLSILCAGFQIS). The Extracellular segment spans residues 108-116 (HSFFTDTQF). A helical transmembrane segment spans residues 117–139 (DTYCLVAFIVIGVVAGLAQTIAF). Gln-135 is a binding site for inosine. At 140–149 (NIGSTMEDNM) the chain is on the cytoplasmic side. The chain crosses the membrane as a helical span at residues 150-174 (GGYMSAGIGISGVFIFVINLLLDQF). Residues 175-185 (VSPEKHYGVNK) lie on the Extracellular side of the membrane. Residues 186 to 208 (AKLLYLYIICELCLILAIVFCVC) traverse the membrane as a helical segment. Topologically, residues 209-241 (NLDLTNKNNKKDEENKENNATLSYMELFKDSYK) are cytoplasmic. The helical transmembrane segment at 242–265 (AILTMFLVNWLTLQLFPGVGHKKW) threads the bilayer. At 266 to 274 (QESHNISDY) the chain is on the extracellular side. A helical transmembrane segment spans residues 275-294 (NVTIIVGMFQVFDFLSRYPP). Asp-287 and Arg-291 together coordinate inosine. Over 295–309 (NLTHIKIFKNFTFSL) the chain is Cytoplasmic. A helical transmembrane segment spans residues 310-330 (NKLLVANSLRLLFIPWFILNA). Over 331 to 338 (CVDHPFFK) the chain is Extracellular. A helical transmembrane segment spans residues 339-362 (NIVQQCVCMAMLAFTNGWFNTVPF). Residues 363–374 (LVFVKELKKAKK) are Cytoplasmic-facing. The chain crosses the membrane as a helical span at residues 375–397 (KKEIEIISTFLVIAMFVGLFCGI). At 398-422 (WTTYIYNLFNIVLPKPDLPPIDVTQ) the chain is on the extracellular side.

This sequence belongs to the SLC29A/ENT transporter (TC 2.A.57) family.

It localises to the cell membrane. The enzyme catalyses inosine(in) = inosine(out). The catalysed reaction is adenosine(in) = adenosine(out). It catalyses the reaction hypoxanthine(out) = hypoxanthine(in). It carries out the reaction guanosine(in) = guanosine(out). The enzyme catalyses guanine(out) = guanine(in). The catalysed reaction is thymidine(in) = thymidine(out). It catalyses the reaction uridine(out) = uridine(in). It carries out the reaction uracil(in) = uracil(out). The enzyme catalyses thymine(out) = thymine(in). The catalysed reaction is adenine(out) = adenine(in). It catalyses the reaction cytosine(out) = cytosine(in). It carries out the reaction xanthine(out) = xanthine(in). With respect to regulation, GSK4 (5-methyl-N-[2-(2-oxo-1-azepanyl)ethyl]-2-phenyl-1,3-oxazole-4-carbox-amide) disrupts the transport activity at 500 nM. Inhibited partially by 10 uM dipyridamole. Inhibited partially by N,N'-1,3-benzothiazole-2,6-diyldi(2-furamide), 2-bromo-N-(4-[1,3]oxazolo[4,5-b]pyridin-2-ylphenyl)benzamide, 4-methyl-7-[(3,4,5-trimethoxybenzyl)oxy]-2H-chromen-2-one, 2-(1-methyl-1H-indol-3-yl)-2-oxo-N-[4-(pyrrolidin-1-ylcarbonyl)phenyl]acet amide and 2-[2-(2-methylphenyl)vinyl]-4(3H)-quinazolinone. Sodium-independent nucleoside and nucleobase transporter with a broad substrate specificity. Plays a key role in the utilization of host purine sources by P.falciparum during intraerythrocytic development enabling parasite growth in the presence of physiological concentrations of adenosine, inosine, guanine, guanosine, xanthine and hypoxanthine. Essential for parasite transition from ring to trophozoite or from trophozoite to schizont stage but not for erythrocyte invasion by merozoites. The sequence is that of Nucleoside transporter 1 from Plasmodium falciparum (isolate 3D7).